Here is a 177-residue protein sequence, read N- to C-terminus: Dynein light chain Tctex-type 5-A (177 aa).

It belongs to the dynein light chain Tctex-type family.

The chain is Dynein light chain Tctex-type 5-A (Dynlt5-a) from Xenopus laevis (African clawed frog).